Reading from the N-terminus, the 344-residue chain is AA9 family lytic polysaccharide monooxygenase cel61A (344 aa).

A signal peptide spans 1 to 21 (MIQKLSNLLVTALAVATGVVG). His-22 lines the Cu(2+) pocket. Cystine bridges form between Cys-77–Cys-198 and Cys-118–Cys-122. An N-linked (GlcNAc...) asparagine glycan is attached at Asn-80. Position 107 (His-107) interacts with Cu(2+). N-linked (GlcNAc...) asparagine glycosylation occurs at Asn-158. His-184 and Gln-193 together coordinate O2. Residue Tyr-195 participates in Cu(2+) binding. A disordered region spans residues 262-310 (ATASATVPGGGSGPTSRTTTTARTTQASSRPSSTPPATTSAPAGGPTQT). Residues 275–310 (PTSRTTTTARTTQASSRPSSTPPATTSAPAGGPTQT) are compositionally biased toward low complexity. The 37-residue stretch at 307-343 (PTQTLYGQCGGSGYSGPTRCAPPATCSTLNPYYAQCL) folds into the CBM1 domain.

The protein belongs to the polysaccharide monooxygenase AA9 family. The cofactor is Cu(2+).

Its subcellular location is the secreted. The enzyme catalyses [(1-&gt;4)-beta-D-glucosyl]n+m + reduced acceptor + O2 = 4-dehydro-beta-D-glucosyl-[(1-&gt;4)-beta-D-glucosyl]n-1 + [(1-&gt;4)-beta-D-glucosyl]m + acceptor + H2O.. Functionally, lytic polysaccharide monooxygenase (LPMO) that depolymerizes crystalline and amorphous polysaccharides via the oxidation of scissile alpha- or beta-(1-4)-glycosidic bonds, yielding C1 or C4 oxidation products. Catalysis by LPMOs requires the reduction of the active-site copper from Cu(II) to Cu(I) by a reducing agent and H(2)O(2) or O(2) as a cosubstrate. Shows activity on beta-glucan and amorphous cellulose. Does not show beta-1-3-glucanase, beta-1,6-glucanase, mannanase, xylanase, beta-1,3-galactosidase, amylase, pectinase, nor chitinase activities. This is AA9 family lytic polysaccharide monooxygenase cel61A from Hypocrea jecorina (Trichoderma reesei).